The following is a 932-amino-acid chain: Glycine dehydrogenase (decarboxylating) (932 aa).

Position 685 is an N6-(pyridoxal phosphate)lysine (Lys685).

Belongs to the GcvP family. As to quaternary structure, the glycine cleavage system is composed of four proteins: P, T, L and H. The cofactor is pyridoxal 5'-phosphate.

It catalyses the reaction N(6)-[(R)-lipoyl]-L-lysyl-[glycine-cleavage complex H protein] + glycine + H(+) = N(6)-[(R)-S(8)-aminomethyldihydrolipoyl]-L-lysyl-[glycine-cleavage complex H protein] + CO2. Functionally, the glycine cleavage system catalyzes the degradation of glycine. The P protein binds the alpha-amino group of glycine through its pyridoxal phosphate cofactor; CO(2) is released and the remaining methylamine moiety is then transferred to the lipoamide cofactor of the H protein. This Brucella melitensis biotype 1 (strain ATCC 23456 / CCUG 17765 / NCTC 10094 / 16M) protein is Glycine dehydrogenase (decarboxylating).